Here is a 431-residue protein sequence, read N- to C-terminus: CCA-adding enzyme (431 aa).

ATP contacts are provided by S50 and K53. Positions 50 and 53 each coordinate CTP. Residues D61, D63, and D112 each coordinate Mg(2+). Residues H135, K155, and Y164 each coordinate ATP. CTP-binding residues include H135, K155, and Y164.

This sequence belongs to the tRNA nucleotidyltransferase/poly(A) polymerase family. Archaeal CCA-adding enzyme subfamily. Homodimer. The cofactor is Mg(2+).

It catalyses the reaction a tRNA precursor + 2 CTP + ATP = a tRNA with a 3' CCA end + 3 diphosphate. The catalysed reaction is a tRNA with a 3' CCA end + 2 CTP + ATP = a tRNA with a 3' CCACCA end + 3 diphosphate. Its function is as follows. Catalyzes the addition and repair of the essential 3'-terminal CCA sequence in tRNAs without using a nucleic acid template. Adds these three nucleotides in the order of C, C, and A to the tRNA nucleotide-73, using CTP and ATP as substrates and producing inorganic pyrophosphate. tRNA 3'-terminal CCA addition is required both for tRNA processing and repair. Also involved in tRNA surveillance by mediating tandem CCA addition to generate a CCACCA at the 3' terminus of unstable tRNAs. While stable tRNAs receive only 3'-terminal CCA, unstable tRNAs are marked with CCACCA and rapidly degraded. This chain is CCA-adding enzyme, found in Thermoplasma acidophilum (strain ATCC 25905 / DSM 1728 / JCM 9062 / NBRC 15155 / AMRC-C165).